Reading from the N-terminus, the 64-residue chain is MPKMKTKSGAAKRFLKTANGIKHKHAFKSHILTKMSTKRKRQLRGSSLLHPSDVAKVERMLRLR.

The protein belongs to the bacterial ribosomal protein bL35 family.

This chain is Large ribosomal subunit protein bL35, found in Pseudomonas savastanoi pv. phaseolicola (strain 1448A / Race 6) (Pseudomonas syringae pv. phaseolicola (strain 1448A / Race 6)).